Here is a 140-residue protein sequence, read N- to C-terminus: Organic hydroperoxide resistance protein-like (140 aa).

This sequence belongs to the OsmC/Ohr family.

This Staphylococcus aureus (strain bovine RF122 / ET3-1) protein is Organic hydroperoxide resistance protein-like.